The primary structure comprises 25 residues: Caerin-2.5 (25 aa).

In terms of tissue distribution, expressed by the skin parotoid and/or rostral glands.

It localises to the secreted. Functionally, antibacterial peptide, that adopts an alpha helical conformation which can disrupt bacterial membranes. Each caerin displays a different antimicrobial specificity. This chain is Caerin-2.5, found in Ranoidea gilleni (Centralian tree frog).